The sequence spans 85 residues: UPF0335 protein BARBAKC583_0130 (85 aa).

This sequence belongs to the UPF0335 family.

The sequence is that of UPF0335 protein BARBAKC583_0130 from Bartonella bacilliformis (strain ATCC 35685 / KC583 / Herrer 020/F12,63).